The chain runs to 257 residues: Snake venom serine protease serpentokallikrein-2 (257 aa).

The signal sequence occupies residues 1-18 (MVLIRVLANLLILQLSYA). The propeptide occupies 19–24 (QKSSEL). Positions 25 to 248 (VIGGDECNIN…HLDWIKGIIA (224 aa)) constitute a Peptidase S1 domain. 6 disulfide bridges follow: Cys-31–Cys-162, Cys-49–Cys-65, Cys-97–Cys-255, Cys-141–Cys-209, Cys-173–Cys-188, and Cys-199–Cys-224. Catalysis depends on His-64, which acts as the Charge relay system. N-linked (GlcNAc...) asparagine glycosylation occurs at Asn-102. Asp-109 functions as the Charge relay system in the catalytic mechanism. Ser-203 functions as the Charge relay system in the catalytic mechanism.

The protein belongs to the peptidase S1 family. Snake venom subfamily. In terms of assembly, monomer. As to expression, expressed by the venom gland.

It localises to the secreted. In terms of biological role, snake venom serine protease that may act in the hemostasis system of the prey. This chain is Snake venom serine protease serpentokallikrein-2, found in Protobothrops mucrosquamatus (Taiwan habu).